A 546-amino-acid chain; its full sequence is 2-isopropylmalate synthase (546 aa).

Residues 8–271 (ILIFDTTLRD…NSFFKRNPDS (264 aa)) form the Pyruvate carboxyltransferase domain. Residues D17, H208, H210, and N244 each coordinate Mn(2+). Residues 408–546 (QLSLVQVSCG…NNTYISNPAN (139 aa)) form a regulatory domain region.

The protein belongs to the alpha-IPM synthase/homocitrate synthase family. LeuA type 1 subfamily. As to quaternary structure, homodimer. Requires Mn(2+) as cofactor.

Its subcellular location is the cytoplasm. The catalysed reaction is 3-methyl-2-oxobutanoate + acetyl-CoA + H2O = (2S)-2-isopropylmalate + CoA + H(+). Its pathway is amino-acid biosynthesis; L-leucine biosynthesis; L-leucine from 3-methyl-2-oxobutanoate: step 1/4. In terms of biological role, catalyzes the condensation of the acetyl group of acetyl-CoA with 3-methyl-2-oxobutanoate (2-ketoisovalerate) to form 3-carboxy-3-hydroxy-4-methylpentanoate (2-isopropylmalate). The sequence is that of 2-isopropylmalate synthase from Prochlorococcus marinus (strain MIT 9301).